The primary structure comprises 612 residues: Phosphopentomutase (612 aa).

Residue A2 is modified to N-acetylalanine. Alpha-D-glucose 1,6-bisphosphate contacts are provided by R63 and S165. S165 (phosphoserine intermediate) is an active-site residue. Positions 165, 322, 324, and 326 each coordinate Mg(2+). At S165 the chain carries Phosphoserine. Positions 326, 327, 400, 424, and 438 each coordinate alpha-D-glucose 1,6-bisphosphate.

This sequence belongs to the phosphohexose mutase family. As to quaternary structure, monomer. It depends on Mg(2+) as a cofactor.

It localises to the cytoplasm. The protein localises to the cytosol. It catalyses the reaction alpha-D-ribose 1-phosphate = D-ribose 5-phosphate. It carries out the reaction 2-deoxy-alpha-D-ribose 1-phosphate = 2-deoxy-D-ribose 5-phosphate. The catalysed reaction is alpha-D-glucose 1-phosphate = alpha-D-glucose 6-phosphate. The enzyme catalyses O-phospho-L-seryl-[protein] + alpha-D-glucose 1-phosphate = alpha-D-glucose 1,6-bisphosphate + L-seryl-[protein]. It catalyses the reaction alpha-D-glucose 1,6-bisphosphate + L-seryl-[protein] = O-phospho-L-seryl-[protein] + alpha-D-glucose 6-phosphate. Its activity is regulated as follows. The phosphomutase activity is stimulated by glucose 1,6-bisphosphate. Its function is as follows. Catalyzes the conversion of the nucleoside breakdown products ribose-1-phosphate and deoxyribose-1-phosphate to the corresponding 5-phosphopentoses. Catalyzes the reversible isomerization of alpha-D-glucose 1-phosphate to alpha-D-glucose 6-phosphate but with a lower catalytic efficiency. The mechanism proceeds via the intermediate compound alpha-D-glucose 1,6-bisphosphate. In vitro, also has a low glucose 1,6-bisphosphate synthase activity which is most probably not physiologically relevant. This Homo sapiens (Human) protein is Phosphopentomutase.